The primary structure comprises 173 residues: Small ribosomal subunit protein uS5 (173 aa).

In terms of domain architecture, S5 DRBM spans 17 to 80 (WQERVIQIRR…ADGKKQLIDV (64 aa)).

The protein belongs to the universal ribosomal protein uS5 family. Part of the 30S ribosomal subunit. Contacts proteins S4 and S8.

Its function is as follows. With S4 and S12 plays an important role in translational accuracy. In terms of biological role, located at the back of the 30S subunit body where it stabilizes the conformation of the head with respect to the body. In Rippkaea orientalis (strain PCC 8801 / RF-1) (Cyanothece sp. (strain PCC 8801)), this protein is Small ribosomal subunit protein uS5.